A 436-amino-acid chain; its full sequence is 3-ketoacyl-CoA thiolase (436 aa).

The active-site Acyl-thioester intermediate is Cys-99. Residues His-392 and Cys-422 each act as proton acceptor in the active site.

It belongs to the thiolase-like superfamily. Thiolase family. In terms of assembly, heterotetramer of two alpha chains (FadJ) and two beta chains (FadI).

The protein resides in the cytoplasm. It carries out the reaction an acyl-CoA + acetyl-CoA = a 3-oxoacyl-CoA + CoA. It participates in lipid metabolism; fatty acid beta-oxidation. Functionally, catalyzes the final step of fatty acid oxidation in which acetyl-CoA is released and the CoA ester of a fatty acid two carbons shorter is formed. The chain is 3-ketoacyl-CoA thiolase from Shewanella frigidimarina (strain NCIMB 400).